The sequence spans 421 residues: CinA-like protein (421 aa).

It belongs to the CinA family.

This Mycobacterium sp. (strain MCS) protein is CinA-like protein.